Consider the following 111-residue polypeptide: Cell division protein FtsB (111 aa).

Residues 1 to 3 (MRL) lie on the Cytoplasmic side of the membrane. Residues 4-21 (ITLFLLLLLLAIQYPLWL) form a helical membrane-spanning segment. Over 22-111 (GKGGWLRVWD…PPPAGQQAHH (90 aa)) the chain is Periplasmic. A coiled-coil region spans residues 31 to 64 (DMQKQVTAQNQRNAELKQRNTKLEGEVKDLKEGT). Positions 89–111 (APAPKTSETPLPPPPPAGQQAHH) are disordered.

It belongs to the FtsB family. Part of a complex composed of FtsB, FtsL and FtsQ.

The protein resides in the cell inner membrane. Essential cell division protein. May link together the upstream cell division proteins, which are predominantly cytoplasmic, with the downstream cell division proteins, which are predominantly periplasmic. The chain is Cell division protein FtsB from Ralstonia pickettii (strain 12J).